We begin with the raw amino-acid sequence, 87 residues long: Small ribosomal subunit protein bS20 (87 aa).

Basic residues predominate over residues Met-1 to Ala-22. The tract at residues Met-1 to Met-27 is disordered.

It belongs to the bacterial ribosomal protein bS20 family.

Functionally, binds directly to 16S ribosomal RNA. This chain is Small ribosomal subunit protein bS20, found in Pectobacterium atrosepticum (strain SCRI 1043 / ATCC BAA-672) (Erwinia carotovora subsp. atroseptica).